A 560-amino-acid chain; its full sequence is N-acetylglucosamine-6-sulfatase (560 aa).

The interval 1–25 (MRLLSLAPDRPRRGGPRHLTSGSPA) is disordered. Positions 1 to 48 (MRLLSLAPDRPRRGGPRHLTSGSPALPPPPPLLLLLLLLGGCLGVSGA) are cleaved as a signal peptide. The Ca(2+) site is built by aspartate 63, aspartate 64, and cysteine 99. Cysteine 99 serves as the catalytic Nucleophile. Cysteine 99 is subject to 3-oxoalanine (Cys). Asparagine 119, asparagine 125, asparagine 191, asparagine 206, asparagine 218, asparagine 287, and asparagine 325 each carry an N-linked (GlcNAc...) asparagine glycan. 2 residues coordinate Ca(2+): aspartate 334 and asparagine 335. N-linked (GlcNAc...) asparagine glycosylation is found at asparagine 370, asparagine 395, asparagine 413, asparagine 430, asparagine 457, and asparagine 488. At serine 549 the chain carries Phosphoserine.

This sequence belongs to the sulfatase family. It depends on Ca(2+) as a cofactor. In terms of processing, the conversion to 3-oxoalanine (also known as C-formylglycine, FGly), of a serine or cysteine residue in prokaryotes and of a cysteine residue in eukaryotes, is critical for catalytic activity.

The protein localises to the lysosome. It catalyses the reaction Hydrolysis of the 6-sulfate groups of the N-acetyl-D-glucosamine 6-sulfate units of heparan sulfate and keratan sulfate.. In terms of biological role, hydrolyzes 6-sulfate groups in N-acetyl-d-glucosaminide units of heparin sulfate and keratan sulfate. This is N-acetylglucosamine-6-sulfatase (GNS) from Bos taurus (Bovine).